A 428-amino-acid polypeptide reads, in one-letter code: AP-1 complex subunit mu-1 (428 aa).

An MHD domain is found at 170–426 (KNEVFLDVIE…ITMAGEYELR (257 aa)).

This sequence belongs to the adaptor complexes medium subunit family. Adaptor protein complex 1 (AP-1) is a heterotetramer composed of two large adaptins (gamma-type subunit and beta-type subunit), a medium adaptin (mu-type subunit) and a small adaptin (sigma-type subunit).

It is found in the golgi apparatus. The protein localises to the cytoplasmic vesicle. Its subcellular location is the clathrin-coated vesicle membrane. Subunit of clathrin-associated adaptor protein complex 1 that plays a role in protein sorting at the trans-Golgi network and early endosomes (TGN/EE). The AP complexes mediate the recruitment of clathrin to membranes and the recognition of sorting signals within the cytosolic tails of transmembrane cargo molecules. Functions redundantly with AP1M2 in multiple post-Golgi trafficking pathways leading from the TGN to the vacuole, the plasma membrane, and the cell-division plane. In Arabidopsis thaliana (Mouse-ear cress), this protein is AP-1 complex subunit mu-1 (AP1M1).